The following is a 431-amino-acid chain: Glutamyl-tRNA reductase (431 aa).

Residues 49–52 (TCNR), Ser-109, 114–116 (EGQ), and Gln-120 contribute to the substrate site. Residue Cys-50 is the Nucleophile of the active site. 189–194 (GAGKMA) is an NADP(+) binding site.

This sequence belongs to the glutamyl-tRNA reductase family. In terms of assembly, homodimer.

It catalyses the reaction (S)-4-amino-5-oxopentanoate + tRNA(Glu) + NADP(+) = L-glutamyl-tRNA(Glu) + NADPH + H(+). It functions in the pathway porphyrin-containing compound metabolism; protoporphyrin-IX biosynthesis; 5-aminolevulinate from L-glutamyl-tRNA(Glu): step 1/2. Its pathway is porphyrin-containing compound metabolism; chlorophyll biosynthesis. Functionally, catalyzes the NADPH-dependent reduction of glutamyl-tRNA(Glu) to glutamate 1-semialdehyde (GSA). This Synechococcus sp. (strain JA-3-3Ab) (Cyanobacteria bacterium Yellowstone A-Prime) protein is Glutamyl-tRNA reductase.